The primary structure comprises 1553 residues: Sterol 3-beta-glucosyltransferase (1553 aa).

Polar residues-rich tracts occupy residues 1 to 10 and 25 to 36; these read MASSQPTSSG and LNTETSSSQHRA. Disordered stretches follow at residues 1–106 and 189–270; these read MASS…NEED and PASA…GLAP. The span at 90–100 shows a compositional bias: basic and acidic residues; sequence LPDRLKDNGKE. Residues 211-222 are compositionally biased toward low complexity; the sequence is LLQSVPSLSRLS. Residues 223-232 are compositionally biased toward basic residues; that stretch reads SSHKSKKTKQ. 2 consecutive GRAM domains span residues 323 to 370 and 464 to 495; these read KKLK…HLPK and SLQR…EEAQ. In terms of domain architecture, PH spans 374 to 470; it reads EIAKSGYLSK…WVKSLQRVIF (97 aa). Disordered stretches follow at residues 542–569, 611–662, and 805–825; these read SPED…GSPR, FSRR…FDDP, and GKKH…VEDD. A compositionally biased stretch (basic and acidic residues) spans 633-650; the sequence is LHGDGRRSFSKPRHEPHA. Residues 651 to 662 are compositionally biased toward polar residues; the sequence is STDSYAQSFDDP. Basic and acidic residues predominate over residues 810–819; the sequence is DHPAGRRTER. The GRAM 3 domain maps to 834 to 900; sequence ARFQAHFALP…KDIETVDKEK (67 aa). Residues serine 1020, arginine 1021, aspartate 1023, alanine 1328, histidine 1330, histidine 1343, serine 1346, glycine 1347, threonine 1348, aspartate 1367, and glutamine 1368 each coordinate UDP-alpha-D-glucose. 2 disordered regions span residues 1446–1504 and 1527–1553; these read KHQS…GSMS and PALG…VKYV. A compositionally biased stretch (acidic residues) spans 1466–1488; sequence PEDDQGQAAEEDDIDADDEEEES.

This sequence belongs to the glycosyltransferase 28 family.

Its subcellular location is the cytoplasm. It is found in the preautophagosomal structure membrane. The enzyme catalyses a sterol + UDP-alpha-D-glucose = a sterol 3-beta-D-glucoside + UDP + H(+). It carries out the reaction ergosterol + UDP-alpha-D-glucose = ergosteryl 3-beta-D-glucoside + UDP + H(+). In terms of biological role, sterol glycosyltransferase responsible for the glycosylation of ergosterol to form ergosterol-glucoside. The polypeptide is Sterol 3-beta-glucosyltransferase (apg-12) (Neurospora crassa (strain ATCC 24698 / 74-OR23-1A / CBS 708.71 / DSM 1257 / FGSC 987)).